The sequence spans 216 residues: 3-isopropylmalate dehydratase small subunit (216 aa).

Belongs to the LeuD family. LeuD type 1 subfamily. As to quaternary structure, heterodimer of LeuC and LeuD.

The catalysed reaction is (2R,3S)-3-isopropylmalate = (2S)-2-isopropylmalate. The protein operates within amino-acid biosynthesis; L-leucine biosynthesis; L-leucine from 3-methyl-2-oxobutanoate: step 2/4. Its function is as follows. Catalyzes the isomerization between 2-isopropylmalate and 3-isopropylmalate, via the formation of 2-isopropylmaleate. The polypeptide is 3-isopropylmalate dehydratase small subunit (Ralstonia nicotianae (strain ATCC BAA-1114 / GMI1000) (Ralstonia solanacearum)).